Reading from the N-terminus, the 469-residue chain is MTEQPTTANQMWGGRFAAGPDAIMEAINASIGFDQRLYAQDIRGSRAHAAMLAAQGIISTSDAEAIGEGLLTVLSEIEKGDFPFSTALEDIHMNVESRLKEIIGEPAGRLHTARSRNDQVATDFRLWVRDQCDAAIAGLDALIRAALSQAEKGADWVMPGFTHLQTAQPVTWGHHMMAYVEMFGRDLSRFRDARKRMNESPLGAAALAGTGFPIDREATARALGFERPMANSLDAVSDRDFALEYLSSAAICAVHLSRLAEELVIWSSAQFRFVTMSDRFSTGSSIMPQKKNPDAAELIRAKIGRILGAAVALFVVMKGLPLAYSKDMQEDKEQVFDASDNLMLALAAMTGMLTDLTANRERLEAAAGSGFSTATDLADWLVREAGLPFRDAHHATGALVAMAEQAGIDLPDLTLEQMQSVNPAITADVYGVLGVHNSVASRMSYGGTAPAQVRAQIARWKEKLEEKSA.

The protein belongs to the lyase 1 family. Argininosuccinate lyase subfamily.

The protein localises to the cytoplasm. It catalyses the reaction 2-(N(omega)-L-arginino)succinate = fumarate + L-arginine. It functions in the pathway amino-acid biosynthesis; L-arginine biosynthesis; L-arginine from L-ornithine and carbamoyl phosphate: step 3/3. In Paracoccus denitrificans (strain Pd 1222), this protein is Argininosuccinate lyase.